The following is a 159-amino-acid chain: S-ribosylhomocysteine lyase (159 aa).

Residues His-53, His-57, and Cys-124 each contribute to the Fe cation site.

Belongs to the LuxS family. Homodimer. Fe cation serves as cofactor.

It catalyses the reaction S-(5-deoxy-D-ribos-5-yl)-L-homocysteine = (S)-4,5-dihydroxypentane-2,3-dione + L-homocysteine. Its function is as follows. Involved in the synthesis of autoinducer 2 (AI-2) which is secreted by bacteria and is used to communicate both the cell density and the metabolic potential of the environment. The regulation of gene expression in response to changes in cell density is called quorum sensing. Catalyzes the transformation of S-ribosylhomocysteine (RHC) to homocysteine (HC) and 4,5-dihydroxy-2,3-pentadione (DPD). This chain is S-ribosylhomocysteine lyase, found in Clostridium beijerinckii (strain ATCC 51743 / NCIMB 8052) (Clostridium acetobutylicum).